Consider the following 305-residue polypeptide: Spermatogenesis-associated protein 4 (305 aa).

A Calponin-homology (CH) domain is found at 49–155 (SRLSRSVLRW…EEVYTLLTHR (107 aa)).

It localises to the nucleus. Functionally, may play a role in apoptosis regulation. The polypeptide is Spermatogenesis-associated protein 4 (SPATA4) (Pan troglodytes (Chimpanzee)).